Reading from the N-terminus, the 550-residue chain is Copine-F (550 aa).

C2 domains follow at residues 1–115 (MAET…RLIG) and 123–246 (ITGK…PIIN). The VWFA domain occupies 296-521 (DLMVAIDCTE…DFQNEILRKL (226 aa)).

Belongs to the copine family.

The sequence is that of Copine-F (cpnF) from Dictyostelium discoideum (Social amoeba).